A 250-amino-acid polypeptide reads, in one-letter code: MALHLGVITLLPEIIQGIHYGVTGRAIEQGLVKIDCWNPRDWSSRPYKQVDDKPYGGGPGMVMMYEPLHAAIKHARSEMKENCKTIYLSPQGKVVRQNDLKQIAAQKQSLLFVAGRYEGIDERIISHHVDEEWSLGDFVLSGGELAAMVFIDAIIRLIPGSLGHLGSAEQDSFMNGLLDCPHYTRPATINGLDVPDVLLGGNHKEIERWRRKQSLGKTWLKRPDLLEKVQLSETDKQLLAEFKCEHGDSC.

S-adenosyl-L-methionine contacts are provided by residues Gly-115 and 135-140 (LGDFVL).

The protein belongs to the RNA methyltransferase TrmD family. As to quaternary structure, homodimer.

It is found in the cytoplasm. The enzyme catalyses guanosine(37) in tRNA + S-adenosyl-L-methionine = N(1)-methylguanosine(37) in tRNA + S-adenosyl-L-homocysteine + H(+). Its function is as follows. Specifically methylates guanosine-37 in various tRNAs. The protein is tRNA (guanine-N(1)-)-methyltransferase of Legionella pneumophila subsp. pneumophila (strain Philadelphia 1 / ATCC 33152 / DSM 7513).